Consider the following 264-residue polypeptide: uncharacterized protein (264 aa).

The chain crosses the membrane as a helical span at residues 7-27; that stretch reads LTLGICLVLLIILIVGYVIMT.

This sequence belongs to the staphylococcal tandem lipoprotein family.

It localises to the cell membrane. This is an uncharacterized protein from Staphylococcus aureus (strain NCTC 8325 / PS 47).